The primary structure comprises 276 residues: NAD kinase (276 aa).

The active-site Proton acceptor is aspartate 68. NAD(+) contacts are provided by residues 68 to 69 (DG), arginine 73, 138 to 139 (NE), lysine 149, aspartate 168, 179 to 184 (TAYSLS), and glutamine 237.

The protein belongs to the NAD kinase family. The cofactor is a divalent metal cation.

It localises to the cytoplasm. The enzyme catalyses NAD(+) + ATP = ADP + NADP(+) + H(+). In terms of biological role, involved in the regulation of the intracellular balance of NAD and NADP, and is a key enzyme in the biosynthesis of NADP. Catalyzes specifically the phosphorylation on 2'-hydroxyl of the adenosine moiety of NAD to yield NADP. In Methanopyrus kandleri (strain AV19 / DSM 6324 / JCM 9639 / NBRC 100938), this protein is NAD kinase.